The chain runs to 221 residues: UPF0758 protein CGSHiEE_07200 (221 aa).

Residues 99–221 enclose the MPN domain; that stretch reads IINDPETVKL…CYSFAENCLL (123 aa). Histidine 170, histidine 172, and aspartate 183 together coordinate Zn(2+). The short motif at 170 to 183 is the JAMM motif element; the sequence is HNHPSGVTEPSYSD.

The protein belongs to the UPF0758 family.

The chain is UPF0758 protein CGSHiEE_07200 from Haemophilus influenzae (strain PittEE).